A 196-amino-acid chain; its full sequence is ATP-dependent Clp protease proteolytic subunit (196 aa).

The active-site Nucleophile is the serine 96. Histidine 121 is an active-site residue.

This sequence belongs to the peptidase S14 family. Fourteen ClpP subunits assemble into 2 heptameric rings which stack back to back to give a disk-like structure with a central cavity, resembling the structure of eukaryotic proteasomes.

Its subcellular location is the cytoplasm. The enzyme catalyses Hydrolysis of proteins to small peptides in the presence of ATP and magnesium. alpha-casein is the usual test substrate. In the absence of ATP, only oligopeptides shorter than five residues are hydrolyzed (such as succinyl-Leu-Tyr-|-NHMec, and Leu-Tyr-Leu-|-Tyr-Trp, in which cleavage of the -Tyr-|-Leu- and -Tyr-|-Trp bonds also occurs).. Its function is as follows. Cleaves peptides in various proteins in a process that requires ATP hydrolysis. Has a chymotrypsin-like activity. Plays a major role in the degradation of misfolded proteins. In Streptococcus pyogenes serotype M3 (strain SSI-1), this protein is ATP-dependent Clp protease proteolytic subunit.